Here is a 473-residue protein sequence, read N- to C-terminus: Aspartyl/glutamyl-tRNA(Asn/Gln) amidotransferase subunit B (473 aa).

This sequence belongs to the GatB/GatE family. GatB subfamily. Heterotrimer of A, B and C subunits.

The enzyme catalyses L-glutamyl-tRNA(Gln) + L-glutamine + ATP + H2O = L-glutaminyl-tRNA(Gln) + L-glutamate + ADP + phosphate + H(+). The catalysed reaction is L-aspartyl-tRNA(Asn) + L-glutamine + ATP + H2O = L-asparaginyl-tRNA(Asn) + L-glutamate + ADP + phosphate + 2 H(+). Functionally, allows the formation of correctly charged Asn-tRNA(Asn) or Gln-tRNA(Gln) through the transamidation of misacylated Asp-tRNA(Asn) or Glu-tRNA(Gln) in organisms which lack either or both of asparaginyl-tRNA or glutaminyl-tRNA synthetases. The reaction takes place in the presence of glutamine and ATP through an activated phospho-Asp-tRNA(Asn) or phospho-Glu-tRNA(Gln). The sequence is that of Aspartyl/glutamyl-tRNA(Asn/Gln) amidotransferase subunit B from Mycoplasmopsis synoviae (strain 53) (Mycoplasma synoviae).